We begin with the raw amino-acid sequence, 65 residues long: Large ribosomal subunit protein bL35 (65 aa).

This sequence belongs to the bacterial ribosomal protein bL35 family.

The protein is Large ribosomal subunit protein bL35 of Polynucleobacter asymbioticus (strain DSM 18221 / CIP 109841 / QLW-P1DMWA-1) (Polynucleobacter necessarius subsp. asymbioticus).